Here is a 548-residue protein sequence, read N- to C-terminus: MAAKEVIFGDAARAKMVEGVNVLANAVKVTLGPKGRNVVLERSFGAPTVTKDGVSVAKEIELKDKLQNMGAQLVKEVASRTSDNAGDGTTTATVLAQAIVREGMKYVAAGMNPMDLKRGIDKAVAATVEQLAAIAKPCTTTKEIAQVGSISANSDASIGERIAEAMEKVGKEGVITVEDGKSLNDELDIVEGMQFDRGYLSPYFINNPEKQTAILENPFILLCDKKISNIRDLLPVLEQVAKAGRPLLIIAEDIEGEALATLVVNNIRGILKTCAVKAPGFGDRRKAMLEDIAILSGGQVVAEEVGLTLEKITLEELGQAKRIEIGKENTTLIDGNGQAVTIEARVKQIRAQIEEATSDYDREKLQERVAKLAGGVAVIKVGAATEVEMKEKKARVEDALHATRAAVEEGIVPGGGVALLRARAAIKIKGDNPDQEAGIRIVLRAMEEPLRMIVQNAGEEASVVVAKVLEGKGNFGYNAANGTYGDMVEMGVLDPAKVTRSALQNAASIAALLLTTDCMVAEVAEDKAAGGMGDMGGMGGMGGMGGMM.

ATP-binding positions include Thr30–Pro33, Lys51, Asp87–Thr91, Gly415, Asn478–Ala480, and Asp494.

The protein belongs to the chaperonin (HSP60) family. As to quaternary structure, forms a cylinder of 14 subunits composed of two heptameric rings stacked back-to-back. Interacts with the co-chaperonin GroES.

The protein resides in the cytoplasm. It carries out the reaction ATP + H2O + a folded polypeptide = ADP + phosphate + an unfolded polypeptide.. Its function is as follows. Together with its co-chaperonin GroES, plays an essential role in assisting protein folding. The GroEL-GroES system forms a nano-cage that allows encapsulation of the non-native substrate proteins and provides a physical environment optimized to promote and accelerate protein folding. This chain is Chaperonin GroEL, found in Janthinobacterium sp. (strain Marseille) (Minibacterium massiliensis).